The chain runs to 179 residues: MKKNLTNIYLIGPMGAGKTSVGSQLAKLTKRILYDSDKEIEKRTGADIAWIFEMEGEAGFRRREREMIEALCKLDNIILATGGGVVLDEKNRQQISETGVVIYLTASIDTQLKRIGQKGEMRRPLFIKNNSKEKLQQLNEIRKPLYQAMADLVYPTDDLNPRQLATQILVDIKQTYSDL.

15-20 (GAGKTS) is a binding site for ATP. A Mg(2+)-binding site is contributed by T19. Substrate is bound by residues D37, R61, and G83. Position 122 (R122) interacts with ATP. R142 lines the substrate pocket.

It belongs to the shikimate kinase family. As to quaternary structure, monomer. Requires Mg(2+) as cofactor.

The protein localises to the cytoplasm. The enzyme catalyses shikimate + ATP = 3-phosphoshikimate + ADP + H(+). The protein operates within metabolic intermediate biosynthesis; chorismate biosynthesis; chorismate from D-erythrose 4-phosphate and phosphoenolpyruvate: step 5/7. In terms of biological role, catalyzes the specific phosphorylation of the 3-hydroxyl group of shikimic acid using ATP as a cosubstrate. The chain is Shikimate kinase from Coxiella burnetii (strain Dugway 5J108-111).